A 108-amino-acid chain; its full sequence is Probable 4-amino-4-deoxy-L-arabinose-phosphoundecaprenol flippase subunit ArnE (108 aa).

A run of 3 helical transmembrane segments spans residues 32 to 52 (PLLL…LVWL), 58 to 78 (VPVG…TLAA), and 85 to 105 (TLSL…AIMG). In terms of domain architecture, EamA spans 34–106 (LLWLGGSVLL…IVAGVAIMGS (73 aa)).

It belongs to the ArnE family. As to quaternary structure, heterodimer of ArnE and ArnF.

The protein resides in the cell inner membrane. It participates in bacterial outer membrane biogenesis; lipopolysaccharide biosynthesis. Functionally, translocates 4-amino-4-deoxy-L-arabinose-phosphoundecaprenol (alpha-L-Ara4N-phosphoundecaprenol) from the cytoplasmic to the periplasmic side of the inner membrane. This Erwinia tasmaniensis (strain DSM 17950 / CFBP 7177 / CIP 109463 / NCPPB 4357 / Et1/99) protein is Probable 4-amino-4-deoxy-L-arabinose-phosphoundecaprenol flippase subunit ArnE.